Reading from the N-terminus, the 219-residue chain is Ribose-5-phosphate isomerase A (219 aa).

Substrate-binding positions include 28–31 (TGST), 81–84 (DGAD), and 94–97 (KGGG). Catalysis depends on E103, which acts as the Proton acceptor. A substrate-binding site is contributed by K121.

This sequence belongs to the ribose 5-phosphate isomerase family. In terms of assembly, homodimer.

The catalysed reaction is aldehydo-D-ribose 5-phosphate = D-ribulose 5-phosphate. It functions in the pathway carbohydrate degradation; pentose phosphate pathway; D-ribose 5-phosphate from D-ribulose 5-phosphate (non-oxidative stage): step 1/1. Catalyzes the reversible conversion of ribose-5-phosphate to ribulose 5-phosphate. In Shigella boydii serotype 18 (strain CDC 3083-94 / BS512), this protein is Ribose-5-phosphate isomerase A.